The primary structure comprises 313 residues: Glutathionyl-hydroquinone reductase PcpF (313 aa).

The active-site Nucleophile is Cys53. Glutathione-binding positions include Trp86, 119 to 122, and 137 to 138; these read RVTI and ES. In terms of domain architecture, GST C-terminal spans 161-285; that stretch reads PAEFRPEIDR…INLRHAKAHY (125 aa). Tyr184 functions as the Proton donor/acceptor in the catalytic mechanism.

Belongs to the GST superfamily. Xi-class GSH transferase family. Homodimer.

The catalysed reaction is 2-(glutathione-S-yl)-hydroquinone + glutathione = hydroquinone + glutathione disulfide. Catalyzes glutathione (GSH)-dependent reduction of glutathionyl-hydroquinones (GS-HQs) to the corresponding hydroquinones. Can act on halogenated substrates such as GS-2,6-dichloro-p-hydroquinone (GS-DiCH) and GS-trichloro-p-hydroquinone (GS-TriCH). Involved in the degradation of pentachlorophenol (PCP), a toxic pollutant. The chain is Glutathionyl-hydroquinone reductase PcpF from Sphingobium chlorophenolicum.